The primary structure comprises 493 residues: CBL-interacting protein kinase 26 (493 aa).

Positions 12–266 (YEIGRQLGQG…IPKIKRSAWY (255 aa)) constitute a Protein kinase domain. ATP is bound by residues 18-26 (LGQGNFAKV) and Lys41. Asp134 functions as the Proton acceptor in the catalytic mechanism. Residues 152 to 181 (DFGLSALSESKRHDGLLHTTCGTPAYVAPE) form an activation loop region. Residues 311 to 332 (KVYTNGEATTSDSPECSNSDGK) form a disordered region. Over residues 316 to 332 (GEATTSDSPECSNSDGK) the composition is skewed to polar residues. In terms of domain architecture, NAF spans 320–360 (TSDSPECSNSDGKQASLSLPNLNAFDIISLSTGFDLSNLFE). The PPI stretch occupies residues 365–394 (RREERFTTRQPAAAIFAKLNELARRFKLKI). A disordered region spans residues 465 to 493 (GQHQQPEQSMQGMQGEQQPSRLPSQQPQG).

Belongs to the protein kinase superfamily. CAMK Ser/Thr protein kinase family. SNF1 subfamily. Requires Mn(2+) as cofactor.

The enzyme catalyses L-seryl-[protein] + ATP = O-phospho-L-seryl-[protein] + ADP + H(+). It catalyses the reaction L-threonyl-[protein] + ATP = O-phospho-L-threonyl-[protein] + ADP + H(+). In terms of biological role, CIPK serine-threonine protein kinases interact with CBL proteins. Binding of a CBL protein to the regulatory NAF domain of CIPK protein lead to the activation of the kinase in a calcium-dependent manner. This chain is CBL-interacting protein kinase 26 (CIPK26), found in Oryza sativa subsp. japonica (Rice).